The following is a 1291-amino-acid chain: Histone-lysine N-methyltransferase SETDB1 (1291 aa).

The stretch at 18–64 forms a coiled coil; the sequence is ESEEIAELQQAVVEELGISMEELRHFIDEELEKMDCVQQRKKQLAEL. A disordered region spans residues 108–147; the sequence is RDSSSEDESSRPTEIIEIPDEDDDVLSIDSGDAGSRTPKD. Serine 112 and serine 117 each carry phosphoserine. Threonine 120 is modified (phosphothreonine). Positions 124–133 are enriched in acidic residues; the sequence is EIPDEDDDVL. Lysine 182 is covalently cross-linked (Glycyl lysine isopeptide (Lys-Gly) (interchain with G-Cter in SUMO2); alternate). Lysine 182 is covalently cross-linked (Glycyl lysine isopeptide (Lys-Gly) (interchain with G-Cter in ubiquitin); alternate). Tudor domains are found at residues 257-320 and 347-403; these read KLYV…LKKT and LLKS…SMKT. Residues 404-545 are disordered; sequence SSASALEKKQ…APAPSALPAP (142 aa). A compositionally biased stretch (polar residues) spans 433–444; the sequence is QYTQDLTGTGTQ. Residues 448–468 are compositionally biased toward pro residues; sequence VEPPQPTAPPAPPFPPAPPLS. Over residues 477–515 the composition is skewed to polar residues; it reads ESQLAQSRKQVAKKSTSFRPGSVGSGHSSPTSPALSENV. The segment covering 528–539 has biased composition (low complexity); sequence SPLGSTASAPAP. An MBD domain is found at 594-665; it reads YRGKNPLLVP…EMFCLDPYVL (72 aa). In terms of domain architecture, Pre-SET spans 727 to 800; that stretch reads VGCDCKDGCR…MCTNRLVQHG (74 aa). Zn(2+) is bound by residues cysteine 729, cysteine 731, cysteine 735, cysteine 741, cysteine 743, cysteine 781, cysteine 785, cysteine 787, and cysteine 792. An SET domain is found at 803–1266; it reads VRLQLFKTQN…AGTELTWDYN (464 aa). S-adenosyl-L-methionine-binding positions include 813-815, aspartate 851, and tyrosine 853; that span reads KGW. Lysine 867 is covalently cross-linked (Glycyl lysine isopeptide (Lys-Gly) (interchain with G-Cter in ubiquitin)). The segment at 868–1160 is disordered; the sequence is EGYESDAPCS…MTGPMKRQVA (293 aa). Residues 896-907 show a composition bias toward acidic residues; sequence EDPEESNDDSSD. Pro residues predominate over residues 951-963; it reads DLGPPHIPVPPSI. At serine 1025 the chain carries Phosphoserine. Positions 1031-1050 are enriched in basic and acidic residues; that stretch reads IKDEGDIKQAKKEDTDDRNK. Lysine 1032 participates in a covalent cross-link: Glycyl lysine isopeptide (Lys-Gly) (interchain with G-Cter in SUMO2); alternate. A Glycyl lysine isopeptide (Lys-Gly) (interchain with G-Cter in SUMO1); alternate cross-link involves residue lysine 1032. Lysine 1038 participates in a covalent cross-link: Glycyl lysine isopeptide (Lys-Gly) (interchain with G-Cter in SUMO2). A compositionally biased stretch (polar residues) spans 1052–1063; that stretch reads SVVTESSRNYGY. Serine 1066 is subject to Phosphoserine. Lysine 1069 is covalently cross-linked (Glycyl lysine isopeptide (Lys-Gly) (interchain with G-Cter in SUMO2)). Over residues 1100–1115 the composition is skewed to low complexity; the sequence is LTLSSSTESEGESGTS. Residues 1116–1140 are compositionally biased toward polar residues; it reads RKPTAGQTSATAVDSDDIQTISSGS. Lysine 1149 is covalently cross-linked (Glycyl lysine isopeptide (Lys-Gly) (interchain with G-Cter in SUMO2)). 2 positions are modified to N6,N6,N6-trimethyllysine; alternate: lysine 1170 and lysine 1178. N6,N6-dimethyllysine; alternate is present on residues lysine 1170 and lysine 1178. S-adenosyl-L-methionine-binding positions include arginine 1220 and 1223–1224; that span reads NH. The Zn(2+) site is built by cysteine 1226, cysteine 1279, cysteine 1281, and cysteine 1286. The Post-SET domain occupies 1275-1291; that stretch reads KELLCCCGAIECRGRLL.

It belongs to the class V-like SAM-binding methyltransferase superfamily. Histone-lysine methyltransferase family. Suvar3-9 subfamily. In terms of assembly, part of a complex containing at least CDYL, REST, WIZ, SETDB1, EHMT1 and EHMT2. Forms a complex with ATRX, TRIM28 and ZNF274. Probably part of a corepressor complex containing ZNF304, TRIM28, SETDB1 and DNMT1. Interacts with TRIM28/TIF1B. Interacts with ATF7IP and ATF7IP2; the interaction with ATF7IP protects SETDB1 from proteasomal degradation and is required to stimulate histone methyltransferase activity and facilitate the conversion of dimethylated to trimethylated H3 'Lys-9'. Interacts with CBX1 and CBX5. Interacts with DNMT3A and DNMT3B. Interacts with SUMO2. Interacts with MPHOSPH8. Interacts with ERG. Interacts with HDAC1, HDAC2, SIN3A and SIN3B. Interacts with ATRX. Interacts with RESF1. Interacts with ZNF638. Interacts with TASOR. Interacts with ZNF263; recruited to the SIX3 promoter along with other proteins involved in chromatin modification and transcriptional corepression where it contributes to transcriptional repression. Interacts with PHF13; the interaction probably enhances SETDB1 chromatin-associated levels and activity. Interacts with VRK1. Post-translationally, degraded by the proteasome, shielded by interaction with ATF7IP. Monoubiquitinated at Lys-867 by E2 enzymes of the UBE2E family. The conjugated-Ub is protected from deubiquitination by the SET domain. Monoubiquitination at Lys-867 is required for catalytic activity, H3K9 methylation and endogenous retrovirus silencing. As to expression, widely expressed. High expression in testis.

It is found in the nucleus. The protein localises to the cytoplasm. Its subcellular location is the chromosome. The catalysed reaction is N(6),N(6)-dimethyl-L-lysyl(9)-[histone H3] + S-adenosyl-L-methionine = N(6),N(6),N(6)-trimethyl-L-lysyl(9)-[histone H3] + S-adenosyl-L-homocysteine + H(+). Histone methyltransferase that specifically trimethylates 'Lys-9' of histone H3. H3 'Lys-9' trimethylation represents a specific tag for epigenetic transcriptional repression by recruiting HP1 (CBX1, CBX3 and/or CBX5) proteins to methylated histones. Mainly functions in euchromatin regions, thereby playing a central role in the silencing of euchromatic genes. H3 'Lys-9' trimethylation is coordinated with DNA methylation. Required for HUSH-mediated heterochromatin formation and gene silencing. Forms a complex with MBD1 and ATF7IP that represses transcription and couples DNA methylation and histone 'Lys-9' trimethylation. Its activity is dependent on MBD1 and is heritably maintained through DNA replication by being recruited by CAF-1. SETDB1 is targeted to histone H3 by TRIM28/TIF1B, a factor recruited by KRAB zinc-finger proteins. Probably forms a corepressor complex required for activated KRAS-mediated promoter hypermethylation and transcriptional silencing of tumor suppressor genes (TSGs) or other tumor-related genes in colorectal cancer (CRC) cells. Required to maintain a transcriptionally repressive state of genes in undifferentiated embryonic stem cells (ESCs). In ESCs, in collaboration with TRIM28, is also required for H3K9me3 and silencing of endogenous and introduced retroviruses in a DNA-methylation independent-pathway. Associates at promoter regions of tumor suppressor genes (TSGs) leading to their gene silencing. The SETDB1-TRIM28-ZNF274 complex may play a role in recruiting ATRX to the 3'-exons of zinc-finger coding genes with atypical chromatin signatures to establish or maintain/protect H3K9me3 at these transcriptionally active regions. The chain is Histone-lysine N-methyltransferase SETDB1 from Homo sapiens (Human).